Consider the following 440-residue polypeptide: Glycerol-3-phosphate dehydrogenase [NAD(+)] 2, mitochondrial (440 aa).

The transit peptide at 1-16 (MLAVRRLTRYTFLKRT) directs the protein to the mitochondrion. Phosphoserine is present on residues Ser-70, Ser-72, and Ser-75. NAD(+)-binding positions include 90-95 (GSGNWG), Phe-122, and Phe-178. Lys-201 is a binding site for substrate. Residue Ala-234 participates in NAD(+) binding. Lys-294 functions as the Proton acceptor in the catalytic mechanism. NAD(+) contacts are provided by Arg-359 and Gln-388. Substrate is bound at residue 359–360 (RN).

It belongs to the NAD-dependent glycerol-3-phosphate dehydrogenase family.

It is found in the cytoplasm. The protein resides in the mitochondrion. It carries out the reaction sn-glycerol 3-phosphate + NAD(+) = dihydroxyacetone phosphate + NADH + H(+). Its function is as follows. Catalyzes the production of glycerol under anaerobic growth conditions. Glycerol production serves as a redox sink by consuming the excess cytosolic NADH during anaerobic metabolism. The sequence is that of Glycerol-3-phosphate dehydrogenase [NAD(+)] 2, mitochondrial from Saccharomyces cerevisiae (strain ATCC 204508 / S288c) (Baker's yeast).